Reading from the N-terminus, the 131-residue chain is MSWQTYVDDHLCCEIDGQHLTSAAILGHDGSVWTESPNFPKFKPEEIAGIVKDFEEPGHLAPTGLFLGGTKYMVIQGEPGVVIRGKKGTGGITIKKTGMALILGIYDEPMTPGQCNLVVERLGDYLIDQGY.

This sequence belongs to the profilin family. Occurs in many kinds of cells as a complex with monomeric actin in a 1:1 ratio.

The protein resides in the cytoplasm. The protein localises to the cytoskeleton. Functionally, binds to actin and affects the structure of the cytoskeleton. At high concentrations, profilin prevents the polymerization of actin, whereas it enhances it at low concentrations. By binding to PIP2, it inhibits the formation of IP3 and DG. This Triticum aestivum (Wheat) protein is Profilin-1 (PRO1).